Reading from the N-terminus, the 132-residue chain is Agouti-signaling protein (132 aa).

Positions 1–22 are cleaved as a signal peptide; it reads MDVTRLLLATLLVFLCFFTAYS. Asn-39 carries N-linked (GlcNAc...) asparagine glycosylation. The segment at 60 to 88 is disordered; it reads KQISRKEAEKKRSSKKEASMKKVARPRTP. The span at 63–79 shows a compositional bias: basic and acidic residues; it reads SRKEAEKKRSSKKEASM. Cystine bridges form between Cys-93–Cys-108, Cys-100–Cys-114, Cys-107–Cys-125, Cys-111–Cys-132, and Cys-116–Cys-123. An Agouti domain is found at 93 to 132; sequence CVATRDSCKPPAPACCDPCASCQCRFFRSACSCRVLSLNC.

The protein resides in the secreted. In terms of biological role, involved in the regulation of melanogenesis. The binding of ASP to MC1R precludes alpha-MSH initiated signaling and thus blocks production of cAMP, leading to a down-regulation of eumelanogenesis (brown/black pigment) and thus increasing synthesis of pheomelanin (yellow/red pigment). The sequence is that of Agouti-signaling protein (ASIP) from Macaca cyclopis (Taiwan macaque).